A 570-amino-acid chain; its full sequence is Proline--tRNA ligase (570 aa).

Belongs to the class-II aminoacyl-tRNA synthetase family. ProS type 1 subfamily. As to quaternary structure, homodimer.

It localises to the cytoplasm. It catalyses the reaction tRNA(Pro) + L-proline + ATP = L-prolyl-tRNA(Pro) + AMP + diphosphate. Functionally, catalyzes the attachment of proline to tRNA(Pro) in a two-step reaction: proline is first activated by ATP to form Pro-AMP and then transferred to the acceptor end of tRNA(Pro). As ProRS can inadvertently accommodate and process non-cognate amino acids such as alanine and cysteine, to avoid such errors it has two additional distinct editing activities against alanine. One activity is designated as 'pretransfer' editing and involves the tRNA(Pro)-independent hydrolysis of activated Ala-AMP. The other activity is designated 'posttransfer' editing and involves deacylation of mischarged Ala-tRNA(Pro). The misacylated Cys-tRNA(Pro) is not edited by ProRS. The protein is Proline--tRNA ligase of Thermoanaerobacter sp. (strain X514).